Reading from the N-terminus, the 420-residue chain is Torsin-4A-A (420 aa).

A helical transmembrane segment spans residues 130–150 (CLLLFIGIVCFQILNAIENLD). 202–209 (GPSGVGKS) is a binding site for ATP.

The protein belongs to the ClpA/ClpB family. Torsin subfamily.

Its subcellular location is the membrane. The chain is Torsin-4A-A (tor4a-a) from Xenopus laevis (African clawed frog).